The primary structure comprises 825 residues: Putative pentatricopeptide repeat-containing protein At2g01510 (825 aa).

PPR repeat units lie at residues 47 to 77 (DTCR…MPHK), 78 to 108 (NTVS…MPDR), 109 to 143 (TVVT…SSCT), 146 to 180 (DHVT…GFDT), 183 to 213 (FLTV…IPEK), 214 to 248 (DSVT…GHQP), 249 to 283 (SDFT…GFSR), 284 to 314 (DASV…MPEL), 315 to 349 (DFVS…GFDR), 350 to 384 (RNFP…TADS), 385 to 415 (ILHV…LPQR), 416 to 450 (TTVS…NLRA), 451 to 485 (DQST…GNLE), 486 to 516 (NVFS…MPDR), 517 to 551 (NAVS…GLQP), 552 to 587 (DSVS…GITP), and 588 to 618 (KKKH…MPFE). A type E motif region spans residues 623–699 (MWSSVLNACR…VPAYSWVEVN (77 aa)). The tract at residues 700 to 730 (HKIHVFSSNDQTHPNGDEIVRKINELTAEIE) is type E(+) motif. The interval 731-825 (REGYKPDTSS…EGVCSCGDYW (95 aa)) is type DYW motif.

The protein belongs to the PPR family. PCMP-H subfamily.

This is Putative pentatricopeptide repeat-containing protein At2g01510 (PCMP-H36) from Arabidopsis thaliana (Mouse-ear cress).